The sequence spans 334 residues: Holliday junction branch migration complex subunit RuvB (334 aa).

Positions 4–184 (ADRLIQPQIQ…FGIPLRLEFY (181 aa)) are large ATPase domain (RuvB-L). ATP-binding positions include R24, G65, K68, T69, T70, 131–133 (EDY), R174, Y184, and R221. T69 contacts Mg(2+). Residues 185–255 (NIKDLSTIVT…VAEHALDLLD (71 aa)) are small ATPAse domain (RuvB-S). Residues 258–334 (SEGFDYMDRK…YQHFELIKPE (77 aa)) are head domain (RuvB-H). Residues R294, R313, and R318 each coordinate DNA.

The protein belongs to the RuvB family. As to quaternary structure, homohexamer. Forms an RuvA(8)-RuvB(12)-Holliday junction (HJ) complex. HJ DNA is sandwiched between 2 RuvA tetramers; dsDNA enters through RuvA and exits via RuvB. An RuvB hexamer assembles on each DNA strand where it exits the tetramer. Each RuvB hexamer is contacted by two RuvA subunits (via domain III) on 2 adjacent RuvB subunits; this complex drives branch migration. In the full resolvosome a probable DNA-RuvA(4)-RuvB(12)-RuvC(2) complex forms which resolves the HJ.

Its subcellular location is the cytoplasm. It carries out the reaction ATP + H2O = ADP + phosphate + H(+). In terms of biological role, the RuvA-RuvB-RuvC complex processes Holliday junction (HJ) DNA during genetic recombination and DNA repair, while the RuvA-RuvB complex plays an important role in the rescue of blocked DNA replication forks via replication fork reversal (RFR). RuvA specifically binds to HJ cruciform DNA, conferring on it an open structure. The RuvB hexamer acts as an ATP-dependent pump, pulling dsDNA into and through the RuvAB complex. RuvB forms 2 homohexamers on either side of HJ DNA bound by 1 or 2 RuvA tetramers; 4 subunits per hexamer contact DNA at a time. Coordinated motions by a converter formed by DNA-disengaged RuvB subunits stimulates ATP hydrolysis and nucleotide exchange. Immobilization of the converter enables RuvB to convert the ATP-contained energy into a lever motion, pulling 2 nucleotides of DNA out of the RuvA tetramer per ATP hydrolyzed, thus driving DNA branch migration. The RuvB motors rotate together with the DNA substrate, which together with the progressing nucleotide cycle form the mechanistic basis for DNA recombination by continuous HJ branch migration. Branch migration allows RuvC to scan DNA until it finds its consensus sequence, where it cleaves and resolves cruciform DNA. This is Holliday junction branch migration complex subunit RuvB from Shewanella baltica (strain OS155 / ATCC BAA-1091).